Reading from the N-terminus, the 330-residue chain is Reaction center protein M chain (330 aa).

3 helical membrane-spanning segments follow: residues 57 to 83 (GWTSIVAFGTGIAWFVIVGFNMLAQVG), 115 to 144 (GGWYIIASFFLLVSVMTWLLRAYLLAEQHK), and 147 to 172 (KHIFWGFAAAVWLFLVLGLFRPILMG). 2 residues coordinate (7R,8Z)-bacteriochlorophyll b: His185 and His205. A helical membrane pass occupies residues 202–230 (NPFHCLSIVFLYGSVLLFCMHGGTILAVT). The Fe cation site is built by His222 and Glu237. Trp255 lines the a ubiquinone pocket. Residues 264–290 (TMEGIHRWAWWFAVLTPITGGIGILLT) traverse the membrane as a helical segment. Residue His269 coordinates Fe cation.

The protein belongs to the reaction center PufL/M/PsbA/D family. Reaction center is composed of four bacteriochlorophylls, two bacteriopheophytins, two ubiquinones, one iron, and two highly hydrophobic polypeptide chains (designated L and M).

The protein localises to the cellular chromatophore membrane. In terms of biological role, the reaction center is a membrane-bound complex that mediates the initial photochemical event in the electron transfer process of photosynthesis. This Roseobacter denitrificans (strain ATCC 33942 / OCh 114) (Erythrobacter sp. (strain OCh 114)) protein is Reaction center protein M chain (pufM).